A 518-amino-acid chain; its full sequence is OTU domain-containing protein 5 (518 aa).

Disordered stretches follow at residues Met1 to Ala79 and Pro105 to Ala144. Over residues Ser39–Pro53 the composition is skewed to pro residues. The span at Ser116–Ser125 shows a compositional bias: low complexity. The 124-residue stretch at Phe171–Pro294 folds into the OTU domain. Positions Met176–Cys182 are cys-loop. Asp179 is a catalytic residue. Cys182 serves as the catalytic Nucleophile. The variable-loop stretch occupies residues Lys231 to Ile241. Residues Tyr282–His287 are his-loop. His287 is an active-site residue. A disordered region spans residues Ala371–Ala450. Low complexity predominate over residues Ala377–Ser390.

The protein belongs to the peptidase C85 family.

The enzyme catalyses Thiol-dependent hydrolysis of ester, thioester, amide, peptide and isopeptide bonds formed by the C-terminal Gly of ubiquitin (a 76-residue protein attached to proteins as an intracellular targeting signal).. Its function is as follows. Deubiquitinating enzyme that may function as negative regulator of the innate immune system. Has peptidase activity towards 'Lys-48'- and 'Lys-63'-linked polyubiquitin chains. Can also cleave 'Lys-11'-linked ubiquitin chains (in vitro). The protein is OTU domain-containing protein 5 (otud5) of Xenopus tropicalis (Western clawed frog).